The primary structure comprises 67 residues: ATP synthase F(0) complex subunit 8 (67 aa).

The chain crosses the membrane as a helical span at residues 8–24 (TWFIMIFSMFLTLFILF). Lys54 bears the N6-acetyllysine; alternate mark. Lys54 bears the N6-succinyllysine; alternate mark. Lys57 is modified (N6-acetyllysine).

This sequence belongs to the ATPase protein 8 family. In terms of assembly, component of the ATP synthase complex composed at least of ATP5F1A/subunit alpha, ATP5F1B/subunit beta, ATP5MC1/subunit c (homooctomer), MT-ATP6/subunit a, MT-ATP8/subunit 8, ATP5ME/subunit e, ATP5MF/subunit f, ATP5MG/subunit g, ATP5MK/subunit k, ATP5MJ/subunit j, ATP5F1C/subunit gamma, ATP5F1D/subunit delta, ATP5F1E/subunit epsilon, ATP5PF/subunit F6, ATP5PB/subunit b, ATP5PD/subunit d, ATP5PO/subunit OSCP. ATP synthase complex consists of a soluble F(1) head domain (subunits alpha(3) and beta(3)) - the catalytic core - and a membrane F(0) domain - the membrane proton channel (subunits c, a, 8, e, f, g, k and j). These two domains are linked by a central stalk (subunits gamma, delta, and epsilon) rotating inside the F1 region and a stationary peripheral stalk (subunits F6, b, d, and OSCP). Interacts with PRICKLE3.

Its subcellular location is the mitochondrion membrane. Functionally, subunit 8, of the mitochondrial membrane ATP synthase complex (F(1)F(0) ATP synthase or Complex V) that produces ATP from ADP in the presence of a proton gradient across the membrane which is generated by electron transport complexes of the respiratory chain. ATP synthase complex consist of a soluble F(1) head domain - the catalytic core - and a membrane F(1) domain - the membrane proton channel. These two domains are linked by a central stalk rotating inside the F(1) region and a stationary peripheral stalk. During catalysis, ATP synthesis in the catalytic domain of F(1) is coupled via a rotary mechanism of the central stalk subunits to proton translocation. In vivo, can only synthesize ATP although its ATP hydrolase activity can be activated artificially in vitro. Part of the complex F(0) domain. The polypeptide is ATP synthase F(0) complex subunit 8 (Canis lupus familiaris (Dog)).